A 482-amino-acid polypeptide reads, in one-letter code: 2-succinylbenzoate--CoA ligase (482 aa).

It belongs to the ATP-dependent AMP-binding enzyme family. MenE subfamily.

The catalysed reaction is 2-succinylbenzoate + ATP + CoA = 2-succinylbenzoyl-CoA + AMP + diphosphate. It participates in quinol/quinone metabolism; 1,4-dihydroxy-2-naphthoate biosynthesis; 1,4-dihydroxy-2-naphthoate from chorismate: step 5/7. Its pathway is quinol/quinone metabolism; menaquinone biosynthesis. In terms of biological role, converts 2-succinylbenzoate (OSB) to 2-succinylbenzoyl-CoA (OSB-CoA). The sequence is that of 2-succinylbenzoate--CoA ligase from Bacillus cereus (strain AH820).